Here is a 602-residue protein sequence, read N- to C-terminus: Multicopper oxidase aurL2 (602 aa).

A signal peptide spans 1-17; the sequence is MLFRFLALLPFVAGAFA. Plastocyanin-like domains follow at residues 38-149 and 160-317; these read DIKI…VRDA and IPLL…KYRC. N52 and N80 each carry an N-linked (GlcNAc...) asparagine glycan. H84, H86, H130, and H132 together coordinate Cu cation. Residues N201, N247, N337, N383, N387, N419, and N424 are each glycosylated (N-linked (GlcNAc...) asparagine). The region spanning 421–556 is the Plastocyanin-like 3 domain; that stretch reads TTPNYTLALE…QVMGMATVWV (136 aa). H469 provides a ligand contact to Cu cation. N-linked (GlcNAc...) asparagine glycans are attached at residues N482 and N486.

The protein belongs to the multicopper oxidase family.

It participates in pigment biosynthesis. Its function is as follows. Multicopper oxidase; part of the gene cluster that mediates the biosynthesis of aurofusarin, a red mycelium pigment which is acting as a mycotoxin. The first step is performed by the polyketide synthase which condenses one acetyl-CoA and 6 malonyl-CoA units to form the first intermediate, the cyclic heptaketide and yellow pigment YWA1. The C2 hydroxyl group in the pyrone ring of YWA1 is probably formed during ring closure by an aldol-type cyclization reaction. The dehydratase aurZ then acts as the first tailoring enzyme in the aurofusarin biosynthetic pathway by converting YWA1 to nor-rubrofusarin. Nor-rubrofusarin is then methylated to rubrofusarin by the O-methyltransferase aurJ. Rubrofusarin is then transported across the plasma membrane by the rubrofusarin-specific pump aurT for further enzymatic processing by the extracellular complex composed of GIP1, aurF, aurO and aurS to yield aurofusarin. The chain is Multicopper oxidase aurL2 (aurL2) from Gibberella zeae (strain ATCC MYA-4620 / CBS 123657 / FGSC 9075 / NRRL 31084 / PH-1) (Wheat head blight fungus).